The chain runs to 134 residues: Large ribosomal subunit protein eL32 (134 aa).

It belongs to the eukaryotic ribosomal protein eL32 family.

This is Large ribosomal subunit protein eL32 (rpl32e) from Picrophilus torridus (strain ATCC 700027 / DSM 9790 / JCM 10055 / NBRC 100828 / KAW 2/3).